Reading from the N-terminus, the 386-residue chain is O-methyltransferase 10 (386 aa).

5 residues coordinate S-adenosyl-L-homocysteine: Ser-207, Gly-231, Asp-254, Asp-274, and Lys-288. Asp-254 provides a ligand contact to S-adenosyl-L-methionine. His-292 serves as the catalytic Proton acceptor.

This sequence belongs to the class I-like SAM-binding methyltransferase superfamily. Cation-independent O-methyltransferase family. In terms of assembly, homodimer.

The catalysed reaction is dopamine + S-adenosyl-L-methionine = 4-methoxytyramine + S-adenosyl-L-homocysteine + H(+). It catalyses the reaction 3,4-dihydroxy-5-methoxyphenethylamine + S-adenosyl-L-methionine = 3-hydroxy-4,5-dimethoxyphenethylamine + S-adenosyl-L-homocysteine + H(+). The enzyme catalyses 3-hydroxy-4,5-dimethoxyphenethylamine + S-adenosyl-L-methionine = mescaline + S-adenosyl-L-homocysteine + H(+). It carries out the reaction 4-hydroxy-3,5-dimethoxyphenethylamine + S-adenosyl-L-methionine = mescaline + S-adenosyl-L-homocysteine + H(+). It functions in the pathway aromatic compound metabolism. Its pathway is alkaloid biosynthesis. O-methyltransferase participating in the biosynthesis of natural products derived from phenylethylamine, including mescaline, a natural hallucinogen potentially used in psychotherapeutic treatments. Catalyzes the O-methylation of mescaline para hydroxyl groups, using dopamine, 3,4-dihydroxy-5-methoxyphenethylamine, 3-hydroxy-4,5-dimethoxyphenethylamine and 4-hydroxy-3,5-dimethoxyphenethylamine as substrates. This is O-methyltransferase 10 from Lophophora williamsii (Peyote).